The sequence spans 171 residues: S-ribosylhomocysteine lyase (171 aa).

Histidine 54, histidine 58, and cysteine 128 together coordinate Fe cation.

The protein belongs to the LuxS family. In terms of assembly, homodimer. The cofactor is Fe cation.

The enzyme catalyses S-(5-deoxy-D-ribos-5-yl)-L-homocysteine = (S)-4,5-dihydroxypentane-2,3-dione + L-homocysteine. Its function is as follows. Involved in the synthesis of autoinducer 2 (AI-2) which is secreted by bacteria and is used to communicate both the cell density and the metabolic potential of the environment. The regulation of gene expression in response to changes in cell density is called quorum sensing. Catalyzes the transformation of S-ribosylhomocysteine (RHC) to homocysteine (HC) and 4,5-dihydroxy-2,3-pentadione (DPD). This is S-ribosylhomocysteine lyase from Shigella boydii serotype 4 (strain Sb227).